Consider the following 818-residue polypeptide: Lon protease (818 aa).

In terms of domain architecture, Lon N-terminal spans 14–216 (LPVLPLRDVV…KVFALIEREI (203 aa)). Residue 370-377 (GPPGVGKT) participates in ATP binding. The Lon proteolytic domain maps to 605 to 786 (ESLVGIVTGL…DEVIKVALMH (182 aa)). Catalysis depends on residues S692 and K735.

The protein belongs to the peptidase S16 family. In terms of assembly, homohexamer. Organized in a ring with a central cavity.

It is found in the cytoplasm. The enzyme catalyses Hydrolysis of proteins in presence of ATP.. In terms of biological role, ATP-dependent serine protease that mediates the selective degradation of mutant and abnormal proteins as well as certain short-lived regulatory proteins. Required for cellular homeostasis and for survival from DNA damage and developmental changes induced by stress. Degrades polypeptides processively to yield small peptide fragments that are 5 to 10 amino acids long. Binds to DNA in a double-stranded, site-specific manner. In Wolbachia pipientis subsp. Culex pipiens (strain wPip), this protein is Lon protease.